A 906-amino-acid polypeptide reads, in one-letter code: Formin-like protein 18 (906 aa).

An N-terminal signal peptide occupies residues 1 to 25 (MSKLRWLIMAFLVCLLLLTPKDLEG). Residues 120–140 (MVVVGLSAACVALVTLVGICF) traverse the membrane as a helical segment. 2 disordered regions span residues 267–416 (AGGG…QADP) and 854–906 (NAKA…DSDD). The segment covering 274–292 (AAPPPPAGPPPPAPPPLPP) has biased composition (pro residues). Residues 293–303 (SHHHHHGHHPP) show a composition bias toward basic residues. Composition is skewed to pro residues over residues 320–339 (APPP…PAPS), 348–375 (GPPP…PPPG), and 383–402 (GPPP…PPFK). Low complexity-rich tracts occupy residues 403-416 (KSPG…QADP) and 854-877 (NAKA…QSSF). The FH2 domain occupies 411 to 866 (AAQADPNKAK…AKKQQQPTPA (456 aa)). A compositionally biased stretch (basic and acidic residues) spans 878 to 889 (RDPRQQIQDRRA). Positions 897 to 906 (SSSSSSDSDD) are enriched in low complexity.

Belongs to the formin-like family. Class-I subfamily.

The protein localises to the membrane. This Oryza sativa subsp. japonica (Rice) protein is Formin-like protein 18 (FH18).